The chain runs to 297 residues: Phosphatidylserine decarboxylase proenzyme (297 aa).

Catalysis depends on charge relay system; for autoendoproteolytic cleavage activity residues Asp-92, His-149, and Ser-254. Ser-254 functions as the Schiff-base intermediate with substrate; via pyruvic acid; for decarboxylase activity in the catalytic mechanism. At Ser-254 the chain carries Pyruvic acid (Ser); by autocatalysis.

Belongs to the phosphatidylserine decarboxylase family. PSD-B subfamily. Prokaryotic type I sub-subfamily. As to quaternary structure, heterodimer of a large membrane-associated beta subunit and a small pyruvoyl-containing alpha subunit. The cofactor is pyruvate. In terms of processing, is synthesized initially as an inactive proenzyme. Formation of the active enzyme involves a self-maturation process in which the active site pyruvoyl group is generated from an internal serine residue via an autocatalytic post-translational modification. Two non-identical subunits are generated from the proenzyme in this reaction, and the pyruvate is formed at the N-terminus of the alpha chain, which is derived from the carboxyl end of the proenzyme. The autoendoproteolytic cleavage occurs by a canonical serine protease mechanism, in which the side chain hydroxyl group of the serine supplies its oxygen atom to form the C-terminus of the beta chain, while the remainder of the serine residue undergoes an oxidative deamination to produce ammonia and the pyruvoyl prosthetic group on the alpha chain. During this reaction, the Ser that is part of the protease active site of the proenzyme becomes the pyruvoyl prosthetic group, which constitutes an essential element of the active site of the mature decarboxylase.

The protein localises to the cell membrane. The enzyme catalyses a 1,2-diacyl-sn-glycero-3-phospho-L-serine + H(+) = a 1,2-diacyl-sn-glycero-3-phosphoethanolamine + CO2. It participates in phospholipid metabolism; phosphatidylethanolamine biosynthesis; phosphatidylethanolamine from CDP-diacylglycerol: step 2/2. Catalyzes the formation of phosphatidylethanolamine (PtdEtn) from phosphatidylserine (PtdSer). This chain is Phosphatidylserine decarboxylase proenzyme, found in Bordetella parapertussis (strain 12822 / ATCC BAA-587 / NCTC 13253).